We begin with the raw amino-acid sequence, 316 residues long: MYSKILGTGSYLPSQVRTNADLEKMVETSDEWIVARTGIRERRIAADNETVADMAFFAAQNAINMAGIDKHDIDMIIVATTSASHTFPSAACQVQGKLGIKGCPAFDLAAACSGFMYALSIADQHVKSGMCKHVLVIGADALSKTCDPTDRSTIILFGDGAGAVVVGASNEPGILSTHIHADGEFGDLLSLEVPVRGGDSDKWLHMAGNEVFKVAVTQLSKLVVDTLKANNMHKSELDWLVPHQANYRIISATAKKLSMSLDQVVITLDRHGNTSAATVPTALDEAVRDGRIQRGQMLLLEAFGGGFTWGSALVKF.

Residues C112 and H243 contribute to the active site. The tract at residues Q244 to R248 is ACP-binding. Residue N273 is part of the active site.

Belongs to the thiolase-like superfamily. FabH family. Homodimer.

The protein resides in the cytoplasm. It carries out the reaction malonyl-[ACP] + acetyl-CoA + H(+) = 3-oxobutanoyl-[ACP] + CO2 + CoA. It participates in lipid metabolism; fatty acid biosynthesis. Catalyzes the condensation reaction of fatty acid synthesis by the addition to an acyl acceptor of two carbons from malonyl-ACP. Catalyzes the first condensation reaction which initiates fatty acid synthesis and may therefore play a role in governing the total rate of fatty acid production. Possesses both acetoacetyl-ACP synthase and acetyl transacylase activities. Its substrate specificity determines the biosynthesis of branched-chain and/or straight-chain of fatty acids. This is Beta-ketoacyl-[acyl-carrier-protein] synthase III 1 from Vibrio cholerae serotype O1 (strain ATCC 39315 / El Tor Inaba N16961).